A 141-amino-acid chain; its full sequence is Cystatin-13 (141 aa).

The signal sequence occupies residues 1–24 (MARFLQTLLFLVIMVEFVSRRVEA). Residues 76–80 (QITDS) form a secondary area of contact region. 2 cysteine pairs are disulfide-bonded: cysteine 94/cysteine 104 and cysteine 118/cysteine 138.

Belongs to the cystatin family. In terms of tissue distribution, expressed exclusively in testis. Found in spermatagonia, spermatocytes, round spermatids, elongating spermatids and spermatozoa.

The protein resides in the secreted. Its subcellular location is the cytoplasm. Its function is as follows. May perform a specialized role during sperm development and maturation. This Mus musculus (Mouse) protein is Cystatin-13.